The sequence spans 443 residues: UDP-N-acetylmuramate--L-alanine ligase (443 aa).

An ATP-binding site is contributed by 110–116 (GAHGKTS).

The protein belongs to the MurCDEF family.

It is found in the cytoplasm. It carries out the reaction UDP-N-acetyl-alpha-D-muramate + L-alanine + ATP = UDP-N-acetyl-alpha-D-muramoyl-L-alanine + ADP + phosphate + H(+). It participates in cell wall biogenesis; peptidoglycan biosynthesis. Cell wall formation. This is UDP-N-acetylmuramate--L-alanine ligase from Streptococcus gordonii (strain Challis / ATCC 35105 / BCRC 15272 / CH1 / DL1 / V288).